Reading from the N-terminus, the 97-residue chain is ESAT-6-like protein EsxG (97 aa).

It belongs to the WXG100 family. CFP-10 subfamily. Forms a tight 1:1 complex with EsxH.

It is found in the secreted. In Mycolicibacterium smegmatis (strain ATCC 700084 / mc(2)155) (Mycobacterium smegmatis), this protein is ESAT-6-like protein EsxG.